We begin with the raw amino-acid sequence, 103 residues long: Small ribosomal subunit protein uS10 (103 aa).

The protein belongs to the universal ribosomal protein uS10 family. Part of the 30S ribosomal subunit.

Involved in the binding of tRNA to the ribosomes. This is Small ribosomal subunit protein uS10 from Acidovorax sp. (strain JS42).